A 491-amino-acid chain; its full sequence is Probable glycine dehydrogenase (decarboxylating) subunit 2 (491 aa).

Lys-264 is modified (N6-(pyridoxal phosphate)lysine).

It belongs to the GcvP family. C-terminal subunit subfamily. As to quaternary structure, the glycine cleavage system is composed of four proteins: P, T, L and H. In this organism, the P 'protein' is a heterodimer of two subunits. Requires pyridoxal 5'-phosphate as cofactor.

The catalysed reaction is N(6)-[(R)-lipoyl]-L-lysyl-[glycine-cleavage complex H protein] + glycine + H(+) = N(6)-[(R)-S(8)-aminomethyldihydrolipoyl]-L-lysyl-[glycine-cleavage complex H protein] + CO2. The glycine cleavage system catalyzes the degradation of glycine. The P protein binds the alpha-amino group of glycine through its pyridoxal phosphate cofactor; CO(2) is released and the remaining methylamine moiety is then transferred to the lipoamide cofactor of the H protein. The sequence is that of Probable glycine dehydrogenase (decarboxylating) subunit 2 from Coxiella burnetii (strain CbuK_Q154) (Coxiella burnetii (strain Q154)).